The following is a 134-amino-acid chain: D-ribose pyranase (134 aa).

Catalysis depends on His20, which acts as the Proton donor. Substrate contacts are provided by residues Asp28, His99, and 123–125 (FSN).

This sequence belongs to the RbsD / FucU family. RbsD subfamily. In terms of assembly, homodecamer.

The protein localises to the cytoplasm. The catalysed reaction is beta-D-ribopyranose = beta-D-ribofuranose. It participates in carbohydrate metabolism; D-ribose degradation; D-ribose 5-phosphate from beta-D-ribopyranose: step 1/2. Functionally, catalyzes the interconversion of beta-pyran and beta-furan forms of D-ribose. The chain is D-ribose pyranase from Staphylococcus epidermidis (strain ATCC 12228 / FDA PCI 1200).